The primary structure comprises 460 residues: Multidrug resistance protein NorM (460 aa).

12 consecutive transmembrane segments (helical) span residues Val18–Gly38, Val53–Ala73, Leu94–Ala114, Thr126–Leu146, Ala159–Tyr179, Pro185–Leu205, Leu242–Val262, Ala276–Ile296, Tyr315–Phe335, Val349–Val369, Phe391–Ile411, and Met415–Leu435.

Belongs to the multi antimicrobial extrusion (MATE) (TC 2.A.66.1) family.

It is found in the cell inner membrane. Functionally, multidrug efflux pump that functions as a Na(+)/drug antiporter. The protein is Multidrug resistance protein NorM (norM) of Aliivibrio fischeri (strain ATCC 700601 / ES114) (Vibrio fischeri).